The sequence spans 305 residues: Tetraspanin-12 (305 aa).

Over 1–12 (MAREDSVRCLRC) the chain is Cytoplasmic. Residues cysteine 9 and cysteine 12 are each lipidated (S-palmitoyl cysteine). The chain crosses the membrane as a helical span at residues 13-33 (LLYALNLLFWLMSISVLGVSA). Topologically, residues 34-59 (WIRDYLNNVLTLTAETRVEEAVILTY) are extracellular. Residues 60–80 (FPVVHPVMIAVCCFLILVGML) traverse the membrane as a helical segment. Residues 81–89 (GYCGTVKRN) are Cytoplasmic-facing. Cysteine 83 is lipidated: S-palmitoyl cysteine. The chain crosses the membrane as a helical span at residues 90-110 (LLLLVWYFGSLLVIFCVELAC). Topologically, residues 111–224 (GVWTYEQEIT…RGTKQLQVLR (114 aa)) are extracellular. A helical transmembrane segment spans residues 225–245 (FLGISIGVTQILAMILTITLL). Over 246-305 (WALYYDRRDPGADQIMSLKNDTSQQLSCHSVELLKPSLTGIFEHTSMANSFNTHFEMEEL) the chain is Cytoplasmic.

It belongs to the tetraspanin (TM4SF) family. In terms of assembly, component of a complex, at least composed of TSPAN12, FZD4 and norrin (NDP). Post-translationally, palmitoylated; required for interaction with ADAM10. The precise position of palmitoylated residues is unclear and occurs either on Cys-9, Cys-12 and/or Cys-83.

Its subcellular location is the cell membrane. Functionally, regulator of cell surface receptor signal transduction. Plays a central role in retinal vascularization by regulating norrin (NDP) signal transduction. Acts in concert with norrin (NDP) to promote FZD4 multimerization and subsequent activation of FZD4, leading to promote accumulation of beta-catenin (CTNNB1) and stimulate LEF/TCF-mediated transcriptional programs. Suprisingly, it only activates the norrin (NDP)-dependent activation of FZD4, while it does not activate the Wnt-dependent activation of FZD4, suggesting the existence of a Wnt-independent signaling that also promote accumulation the beta-catenin (CTNNB1). The sequence is that of Tetraspanin-12 (TSPAN12) from Gallus gallus (Chicken).